Consider the following 132-residue polypeptide: Small ribosomal subunit protein uS8 (132 aa).

The protein belongs to the universal ribosomal protein uS8 family. In terms of assembly, part of the 30S ribosomal subunit. Contacts proteins S5 and S12.

Functionally, one of the primary rRNA binding proteins, it binds directly to 16S rRNA central domain where it helps coordinate assembly of the platform of the 30S subunit. The chain is Small ribosomal subunit protein uS8 from Mycolicibacterium smegmatis (strain ATCC 700084 / mc(2)155) (Mycobacterium smegmatis).